A 396-amino-acid chain; its full sequence is Tryptophan synthase beta chain (396 aa).

Lysine 88 is modified (N6-(pyridoxal phosphate)lysine).

It belongs to the TrpB family. In terms of assembly, tetramer of two alpha and two beta chains. Pyridoxal 5'-phosphate is required as a cofactor.

It carries out the reaction (1S,2R)-1-C-(indol-3-yl)glycerol 3-phosphate + L-serine = D-glyceraldehyde 3-phosphate + L-tryptophan + H2O. The protein operates within amino-acid biosynthesis; L-tryptophan biosynthesis; L-tryptophan from chorismate: step 5/5. The beta subunit is responsible for the synthesis of L-tryptophan from indole and L-serine. The protein is Tryptophan synthase beta chain of Shewanella sp. (strain MR-7).